Here is an 856-residue protein sequence, read N- to C-terminus: Dynamin-1 (856 aa).

Residues 28 to 294 (DLDLPQIAVV…LTNHIRDTLP (267 aa)) form the Dynamin-type G domain. The segment at 38 to 45 (GGQSAGKS) is G1 motif. GDP-binding residues include Ser-41, Gly-43, Lys-44, Ser-45, Ser-46, Arg-59, and Gly-60. The tract at residues 64–66 (VTR) is G2 motif. Position 80 is a phosphotyrosine (Tyr-80). Tyr-125 bears the 3'-nitrotyrosine; alternate mark. Tyr-125 carries the phosphotyrosine; alternate modification. The segment at 136-139 (DLPG) is G3 motif. Positions 205–208 (TKLD) are G4 motif. GDP contacts are provided by Lys-206, Asp-208, Asp-211, Asn-236, Arg-237, and Gln-239. A G5 motif region spans residues 235 to 238 (VNRS). Phosphoserine occurs at positions 306 and 347. A Phosphotyrosine modification is found at Tyr-354. The residue at position 512 (Ser-512) is a Phosphoserine. The 107-residue stretch at 519–625 (LVIRKGWLTI…WKASFLRAGV (107 aa)) folds into the PH domain. Residues 659–750 (VETIRNLVDS…IIGDINTTTV (92 aa)) enclose the GED domain. A disordered region spans residues 750-856 (VSTPMPPPVD…PIGSGKSIPS (107 aa)). A compositionally biased stretch (polar residues) spans 763–781 (LQVQSVPTGRRSPTSSPTP). Residues Ser-774 and Ser-778 each carry the phosphoserine modification. Residue Arg-796 is modified to Omega-N-methylarginine. Ser-822 is modified (phosphoserine). Residues 825–844 (PFGPPPQVPSRPNRAPPGVP) show a composition bias toward pro residues.

The protein belongs to the TRAFAC class dynamin-like GTPase superfamily. Dynamin/Fzo/YdjA family. Homodimer; homodimerization is mediated by the dynamin-type G domain which promotes assembly-stimulated GTPase activity. Homo-tetramer formed from two dimers in the absence of lipid. Oligomerizes into a helical polymer that self-assembles around the vesicle membrane, when associated to the menbrane through lipid binding. Interacts (via C-terminal proline-rich domain (PRD)) with SNX9 (via SH3 domain); this interaction allows regulation of DNM1 self-assembly during late stages of endocytic vesicle formation and supports DNM1's early functions in accelerating clathrin-coated pits (CCPs) maturation in non neuronals cell. Interacts (via C-terminal proline-rich domain (PRD)) with MYO1E (via SH3 domain); this interaction regulates receptor-mediated endocytosis. Interacts with SNX33 (via SH3 domain); this interaction decreases DNM1-dependent endocytosis. Interacts with DIAPH1. Interacts with GRB2 (via SH3 domain); this interaction mediates disassembly of DNM1 polymers, therefore modulates self-assembly. Forms a complex with BIN1 (via SH3 domain) and SH3GL2 (via SH3 domain). Forms a complex with SH3GL2 (via SH3 domain) and AMPH (via SH3 domain). Forms a complex with SH3GL2 (via SH3 domain) and SYNJ1. Interacts with AMPH. Interacts (via C-terminal proline-rich domain (PRD)) with SYT1; this interaction facilitates vesicle fission during clathrin-mediated endocytosis (CME). Interacts (via C-terminal proline-rich domain (PRD)) with PLCG1 (via SH3 domain); this interaction stimulates the release of GDP from DNM1 and enhances DNM1-dependent endocytosis. Interacts with SNPH; this interaction inhibits the binding of DNM1 to AMPH and DNM1-receptor-mediated endocytosis. Interacts with CAV1. Interacts with SH3GLB1 (via SH3 domain). Interacts with PACSIN1 (via SH3 domain), PACSIN2 (via SH3 domain) and PACSIN3 (via SH3 domain). Interacts with UNC119; this interaction decreases DNM1's GTPase activity and affects DNM1's interaction with AMPH. Interacts with AMPH. Interacts (GTP-bound form) with DNAJC6; this interaction allows clathrin-coated vesicle (CCV) formation at the plasma membrane. Post-translationally, phosphorylation at Ser-774 by GSK3B/GSK3-beta leads to inactivation of receptor-mediated endocytosis in non-neuronal cells. Dephosphorylation at Ser-774, through the EGFR downstream signaling, leads to activation and regulates early stages of clathrin-mediated endocytosis (CME).

It is found in the cell membrane. Its subcellular location is the membrane. The protein localises to the clathrin-coated pit. The protein resides in the cytoplasmic vesicle. It localises to the presynapse. It is found in the secretory vesicle. Its subcellular location is the chromaffin granule. It catalyses the reaction GTP + H2O = GDP + phosphate + H(+). Catalyzes the hydrolysis of GTP and utilizes this energy to mediate vesicle scission and participates in many forms of endocytosis, such as clathrin-mediated endocytosis or synaptic vesicle endocytosis as well as rapid endocytosis (RE). Associates to the membrane, through lipid binding, and self-assembles into rings and stacks of interconnected rings through oligomerization to form a helical polymer around the vesicle membrane leading to constriction of invaginated coated pits around their necks. Self-assembly of the helical polymer induces membrane tubules narrowing until the polymer reaches a length sufficient to trigger GTP hydrolysis. Depending on the curvature imposed on the tubules, membrane detachment from the helical polymer upon GTP hydrolysis can cause spontaneous hemifission followed by complete fission. May play a role in regulating early stages of clathrin-mediated endocytosis in non-neuronal cells through its activation by dephosphorylation via the signaling downstream of EGFR. Controls vesicle size at a step before fission, during formation of membrane pits, at hippocampal synapses. Controls plastic adaptation of the synaptic vesicle recycling machinery to high levels of activity. Mediates rapid endocytosis (RE), a Ca(2+)-dependent and clathrin- and K(+)-independent process in chromaffin cells. Microtubule-associated force-producing protein involved in producing microtubule bundles and able to bind and hydrolyze GTP. Through its interaction with DNAJC6, acts during the early steps of clathrin-coated vesicle (CCV) formation. The chain is Dynamin-1 from Bos taurus (Bovine).